A 200-amino-acid chain; its full sequence is Ribosomal RNA large subunit methyltransferase E (200 aa).

5 residues coordinate S-adenosyl-L-methionine: Gly-49, Trp-51, Asp-69, Asp-87, and Asp-111. The active-site Proton acceptor is Lys-151.

The protein belongs to the class I-like SAM-binding methyltransferase superfamily. RNA methyltransferase RlmE family.

The protein localises to the cytoplasm. It carries out the reaction uridine(2552) in 23S rRNA + S-adenosyl-L-methionine = 2'-O-methyluridine(2552) in 23S rRNA + S-adenosyl-L-homocysteine + H(+). Specifically methylates the uridine in position 2552 of 23S rRNA at the 2'-O position of the ribose in the fully assembled 50S ribosomal subunit. The sequence is that of Ribosomal RNA large subunit methyltransferase E from Lawsonia intracellularis (strain PHE/MN1-00).